Here is a 489-residue protein sequence, read N- to C-terminus: Probable cytosol aminopeptidase (489 aa).

Mn(2+) is bound by residues Lys255 and Asp260. The active site involves Lys267. Mn(2+) contacts are provided by Asp279, Asp339, and Glu341. Arg343 is an active-site residue.

Belongs to the peptidase M17 family. Mn(2+) is required as a cofactor.

Its subcellular location is the cytoplasm. It catalyses the reaction Release of an N-terminal amino acid, Xaa-|-Yaa-, in which Xaa is preferably Leu, but may be other amino acids including Pro although not Arg or Lys, and Yaa may be Pro. Amino acid amides and methyl esters are also readily hydrolyzed, but rates on arylamides are exceedingly low.. The enzyme catalyses Release of an N-terminal amino acid, preferentially leucine, but not glutamic or aspartic acids.. Functionally, presumably involved in the processing and regular turnover of intracellular proteins. Catalyzes the removal of unsubstituted N-terminal amino acids from various peptides. The polypeptide is Probable cytosol aminopeptidase (Synechococcus sp. (strain CC9605)).